Here is a 362-residue protein sequence, read N- to C-terminus: Protein OCA4 (362 aa).

In terms of biological role, required for replication of Brome mosaic virus (BMV). This chain is Protein OCA4 (OCA4), found in Saccharomyces cerevisiae (strain ATCC 204508 / S288c) (Baker's yeast).